The sequence spans 204 residues: Histone chaperone ASF1A (204 aa).

Residues 1 to 156 (MAKVQVNNVV…TRFHINWEDN (156 aa)) are interaction with histone H3, CHAF1B, and HIRA. The Required for interaction with HIRA signature appears at 31–37 (IEDLSED). The required for interaction with HIRA stretch occupies residues 155–204 (DNTEKLEDAESSNPNLPSLLSTDALPSASKGWSTSENSLNVMLESHMDCM). Ser-192 carries the post-translational modification Phosphoserine; by TLK2.

The protein belongs to the ASF1 family. In terms of assembly, interacts with histone H3 (via C-terminus), including histone H3.1, H3.2 and H3.3, and histone H4; the interaction with H3 is direct. Probably interacts with the heterodimeric form of H3-H4 taking the place of the second dimer. Interacts with the CHAF1A, CHAF1B and RBBP4 subunits of the CAF-1 complex. Interacts with CABIN1, HAT1, HIRA, NASP, TAF1 and UBN1. Found in a soluble complex with NASP and histones H3 and H4; the interaction with NASP is probably indirect and mediated by H3-H4. Interacts with CDAN1. Found in a cytosolic complex with IPO4 and histones H3 and H4. Interacts with CREBBP. Post-translationally, phosphorylated by TLK1 and TLK2. Highly phosphorylated in S-phase and at lower levels in M-phase. TLK2-mediated phosphorylation at Ser-192 prevents proteasome-dependent degradation.

The protein resides in the nucleus. In terms of biological role, histone chaperone that facilitates histone deposition and histone exchange and removal during nucleosome assembly and disassembly. Cooperates with chromatin assembly factor 1 (CAF-1) to promote replication-dependent chromatin assembly and with HIRA to promote replication-independent chromatin assembly. Promotes homologous recombination-mediated repair of double-strand breaks (DSBs) at stalled or collapsed replication forks: acts by mediating histone replacement at DSBs, leading to recruitment of the MMS22L-TONSL complex and subsequent loading of RAD51. Also involved in the nuclear import of the histone H3-H4 dimer together with importin-4 (IPO4): specifically recognizes and binds newly synthesized histones with the monomethylation of H3 'Lys-9' and acetylation at 'Lys-14' (H3K9me1K14ac) marks, and diacetylation at 'Lys-5' and 'Lys-12' of H4 (H4K5K12ac) marks in the cytosol. Required for the formation of senescence-associated heterochromatin foci (SAHF) and efficient senescence-associated cell cycle exit. The chain is Histone chaperone ASF1A (ASF1A) from Bos taurus (Bovine).